The following is a 511-amino-acid chain: GMP synthase [glutamine-hydrolyzing] (511 aa).

A Glutamine amidotransferase type-1 domain is found at 5–195 (DILVLDFGSQ…AKYACNCESV (191 aa)). Residue cysteine 82 is the Nucleophile of the active site. Residues histidine 169 and glutamate 171 contribute to the active site. In terms of domain architecture, GMPS ATP-PPase spans 196–386 (WNMGSFAKTQ…LGLSKEVVYR (191 aa)). 223-229 (SGGVDSS) is an ATP binding site.

As to quaternary structure, homodimer.

It carries out the reaction XMP + L-glutamine + ATP + H2O = GMP + L-glutamate + AMP + diphosphate + 2 H(+). Its pathway is purine metabolism; GMP biosynthesis; GMP from XMP (L-Gln route): step 1/1. Catalyzes the synthesis of GMP from XMP. This Campylobacter jejuni subsp. doylei (strain ATCC BAA-1458 / RM4099 / 269.97) protein is GMP synthase [glutamine-hydrolyzing].